The chain runs to 268 residues: Undecaprenyl-diphosphatase (268 aa).

The next 7 helical transmembrane spans lie at Phe47 to Leu67, Phe83 to Gly103, Leu109 to Val129, Phe144 to Val164, Ala184 to Leu204, Ile217 to Phe237, and Leu248 to Leu268.

Belongs to the UppP family.

The protein resides in the cell inner membrane. The enzyme catalyses di-trans,octa-cis-undecaprenyl diphosphate + H2O = di-trans,octa-cis-undecaprenyl phosphate + phosphate + H(+). Catalyzes the dephosphorylation of undecaprenyl diphosphate (UPP). Confers resistance to bacitracin. The chain is Undecaprenyl-diphosphatase from Rhodopseudomonas palustris (strain ATCC BAA-98 / CGA009).